A 549-amino-acid polypeptide reads, in one-letter code: Thermosome subunit (549 aa).

The span at Glu-528–Gly-538 shows a compositional bias: basic and acidic residues. The disordered stretch occupies residues Glu-528–Asp-549. Low complexity predominate over residues Glu-540 to Asp-549.

Belongs to the TCP-1 chaperonin family. As to quaternary structure, forms an oligomeric complex of eight-membered rings.

Its function is as follows. Molecular chaperone; binds unfolded polypeptides in vitro, and has a weak ATPase activity. This is Thermosome subunit (ths) from Pyrococcus horikoshii (strain ATCC 700860 / DSM 12428 / JCM 9974 / NBRC 100139 / OT-3).